The primary structure comprises 1105 residues: Lysylphosphatidylglycerol biosynthesis bifunctional protein LysX (1105 aa).

The phosphatidylglycerol lysyltransferase stretch occupies residues 1 to 603 (MTVTKPRSVQ…LLHHDGSAPD (603 aa)). The next 7 helical transmembrane spans lie at 20-40 (VPAA…LASI), 62-82 (FPDT…ALAA), 86-106 (IAWL…AADI), 117-137 (FGEN…VLGY), 154-174 (AVLV…VELF), 186-203 (YVAN…DLFT), and 208-228 (VFLN…ATIV). A lysine--tRNA ligase region spans residues 604-1105 (VSGLRQSAIA…TLPFPLAKPH (502 aa)). 2 residues coordinate Mg(2+): Asp-1017 and Glu-1024.

The protein in the N-terminal section; belongs to the LPG synthetase family. It in the C-terminal section; belongs to the class-II aminoacyl-tRNA synthetase family. It depends on Mg(2+) as a cofactor.

It localises to the cell membrane. It catalyses the reaction tRNA(Lys) + L-lysine + ATP = L-lysyl-tRNA(Lys) + AMP + diphosphate. The catalysed reaction is L-lysyl-tRNA(Lys) + a 1,2-diacyl-sn-glycero-3-phospho-(1'-sn-glycerol) = a 1,2-diacyl-sn-glycero-3-phospho-1'-(3'-O-L-lysyl)-sn-glycerol + tRNA(Lys). Functionally, catalyzes the production of L-lysyl-tRNA(Lys)transfer and the transfer of a lysyl group from L-lysyl-tRNA(Lys) to membrane-bound phosphatidylglycerol (PG), which produces lysylphosphatidylglycerol (LPG), one of the components of the bacterial membrane with a positive net charge. LPG synthesis contributes to the resistance to cationic antimicrobial peptides (CAMPs) and likely protects M.tuberculosis against the CAMPs produced by competiting microorganisms (bacteriocins). In fact, the modification of anionic phosphatidylglycerol with positively charged L-lysine results in repulsion of the peptides. This Mycobacterium marinum (strain ATCC BAA-535 / M) protein is Lysylphosphatidylglycerol biosynthesis bifunctional protein LysX (lysX).